The chain runs to 121 residues: uncharacterized protein (121 aa).

This is an uncharacterized protein from Archaeoglobus fulgidus (strain ATCC 49558 / DSM 4304 / JCM 9628 / NBRC 100126 / VC-16).